The primary structure comprises 201 residues: Holliday junction branch migration complex subunit RuvA (201 aa).

Residues Met1–Ile63 form a domain I region. A domain II region spans residues Asp64–Ser142. Residues Thr143 to Ser152 are flexible linker. Positions Ser152–Lys201 are domain III.

Belongs to the RuvA family. As to quaternary structure, homotetramer. Forms an RuvA(8)-RuvB(12)-Holliday junction (HJ) complex. HJ DNA is sandwiched between 2 RuvA tetramers; dsDNA enters through RuvA and exits via RuvB. An RuvB hexamer assembles on each DNA strand where it exits the tetramer. Each RuvB hexamer is contacted by two RuvA subunits (via domain III) on 2 adjacent RuvB subunits; this complex drives branch migration. In the full resolvosome a probable DNA-RuvA(4)-RuvB(12)-RuvC(2) complex forms which resolves the HJ.

Its subcellular location is the cytoplasm. In terms of biological role, the RuvA-RuvB-RuvC complex processes Holliday junction (HJ) DNA during genetic recombination and DNA repair, while the RuvA-RuvB complex plays an important role in the rescue of blocked DNA replication forks via replication fork reversal (RFR). RuvA specifically binds to HJ cruciform DNA, conferring on it an open structure. The RuvB hexamer acts as an ATP-dependent pump, pulling dsDNA into and through the RuvAB complex. HJ branch migration allows RuvC to scan DNA until it finds its consensus sequence, where it cleaves and resolves the cruciform DNA. This chain is Holliday junction branch migration complex subunit RuvA, found in Acinetobacter baylyi (strain ATCC 33305 / BD413 / ADP1).